The sequence spans 348 residues: MKTAENIRGTGSDGPRKRGLCVLCGLPAAGKSTFARALAHRLQQEQGWAIGVVAYDDVMPDAFLAGARARPAPSQWKLLRQELLKYLEYFLMAVINGCQMSVPPNRTEAMWEDFITCLKDQDLIFSAAFEAQSCYLLTKTAVSRPLFLVLDDNFYYQSMRYEVYQLARKYSLGFCQLFLDCPLETCLQRNGQRPQALPPETIHLMGRKLEKPNPEKNAWEHNSLTIPSPACASEASLEVTDLLLTALENPVKYAEDNMEQKDTDRIICSTNILHKTDQTLRRIVSQTMKEAKGNQEAFSEMTFKQRWVRANHAAIWRIILGNEHIKCRSAKVGWLQCCRIEKRPLSTG.

Residue 25-32 (GLPAAGKS) coordinates ATP.

Belongs to the L-seryl-tRNA(Sec) kinase family. Mg(2+) is required as a cofactor.

It carries out the reaction L-seryl-tRNA(Sec) + ATP = O-phospho-L-seryl-tRNA(Sec) + ADP. It participates in aminoacyl-tRNA biosynthesis; selenocysteinyl-tRNA(Sec) biosynthesis; selenocysteinyl-tRNA(Sec) from L-seryl-tRNA(Sec) (archaeal/eukaryal route): step 1/2. Its function is as follows. Specifically phosphorylates seryl-tRNA(Sec) to O-phosphoseryl-tRNA(Sec), an activated intermediate for selenocysteine biosynthesis. This chain is L-seryl-tRNA(Sec) kinase (PSTK), found in Homo sapiens (Human).